The chain runs to 231 residues: Androgen-dependent TFPI-regulating protein (231 aa).

Over 1-7 (MTRTTTC) the chain is Cytoplasmic. The helical transmembrane segment at 8–28 (VYHFLVWNWYIFLNYYIPLIG) threads the bilayer. The Extracellular segment spans residues 29-45 (KDDEKLKEFHDGGRSKY). A helical transmembrane segment spans residues 46-66 (LTLLNLLLQAIFFGVACLDDV). The Cytoplasmic segment spans residues 67 to 85 (LKRIIGRKDIKFITSTRDL). The chain crosses the membrane as a helical span at residues 86-106 (LFSTLVFPISTFIFLVFWTLF). At 107 to 123 (YYDRSLIYPKGLDDYFP) the chain is on the extracellular side. Residues 124-144 (AWLNHAMHTYILLFVLVETIL) form a helical membrane-spanning segment. The Cytoplasmic segment spans residues 145–154 (RPHHYPSKKL). A helical transmembrane segment spans residues 155 to 172 (GLALLGACNLAYITRVLW). The Extracellular portion of the chain corresponds to 173-190 (RYSQTGNWVYPVFASLNP). A helical membrane pass occupies residues 191–211 (LGIIIFFLVCYILNASIYLVG). Residues 212–231 (EKINHWKWGATVKPLMKKKK) lie on the Cytoplasmic side of the membrane.

This sequence belongs to the AIG1 family. In terms of tissue distribution, highly expressed in flank organs and weakly in testis and earlobes.

Its subcellular location is the cell membrane. The catalysed reaction is 9-hexadecanoyloxy-octadecanoate + H2O = 9-hydroxy-octadecanoate + hexadecanoate + H(+). It carries out the reaction 12-hexadecanoyloxy-octadecanoate + H2O = 12-hydroxyoctadecanoate + hexadecanoate + H(+). The enzyme catalyses 9-(9Z-hexadecenoyloxy)-octadecanoate + H2O = (9Z)-hexadecenoate + 9-hydroxy-octadecanoate + H(+). It catalyses the reaction 12-(9Z-hexadecenoyloxy)-octadecanoate + H2O = 12-hydroxyoctadecanoate + (9Z)-hexadecenoate + H(+). The catalysed reaction is 13-(9Z-hexadecenoyloxy)-octadecanoate + H2O = 13-hydroxy-octadecanoate + (9Z)-hexadecenoate + H(+). It carries out the reaction 9-octadecanoyloxy-octadecanoate + H2O = 9-hydroxy-octadecanoate + octadecanoate + H(+). The enzyme catalyses 12-octadecanoyloxy-octadecanoate + H2O = 12-hydroxyoctadecanoate + octadecanoate + H(+). It catalyses the reaction 13-octadecanoyloxy-octadecanoate + H2O = 13-hydroxy-octadecanoate + octadecanoate + H(+). The catalysed reaction is 9-(9Z-octadecenoyloxy)-octadecanoate + H2O = 9-hydroxy-octadecanoate + (9Z)-octadecenoate + H(+). It carries out the reaction 12-(9Z-octadecenoyloxy)-octadecanoate + H2O = 12-hydroxyoctadecanoate + (9Z)-octadecenoate + H(+). The enzyme catalyses 13-(9Z-octadecenoyloxy)-octadecanoate + H2O = 13-hydroxy-octadecanoate + (9Z)-octadecenoate + H(+). It catalyses the reaction 5-(9Z-octadecenoyloxy)-octadecanoate + H2O = 5-hydroxy-octadecanoate + (9Z)-octadecenoate + H(+). Its function is as follows. Hydrolyzes bioactive fatty-acid esters of hydroxy-fatty acids (FAHFAs), but not other major classes of lipids. Shows a preference for FAHFAs with branching distal from the carboxylate head group of the lipids. Regulates the expression and the cell-associated anticoagulant activity of the inhibitor TFPI in endothelial cells (in vitro). The sequence is that of Androgen-dependent TFPI-regulating protein (ADTRP) from Mesocricetus auratus (Golden hamster).